Reading from the N-terminus, the 502-residue chain is Probable cytosol aminopeptidase 2 (502 aa).

Mn(2+) is bound by residues lysine 269 and aspartate 274. The active site involves lysine 281. Mn(2+) contacts are provided by aspartate 292, aspartate 351, and glutamate 353. Arginine 355 is an active-site residue.

The protein belongs to the peptidase M17 family. Requires Mn(2+) as cofactor.

It localises to the cytoplasm. The enzyme catalyses Release of an N-terminal amino acid, Xaa-|-Yaa-, in which Xaa is preferably Leu, but may be other amino acids including Pro although not Arg or Lys, and Yaa may be Pro. Amino acid amides and methyl esters are also readily hydrolyzed, but rates on arylamides are exceedingly low.. The catalysed reaction is Release of an N-terminal amino acid, preferentially leucine, but not glutamic or aspartic acids.. Its function is as follows. Presumably involved in the processing and regular turnover of intracellular proteins. Catalyzes the removal of unsubstituted N-terminal amino acids from various peptides. The chain is Probable cytosol aminopeptidase 2 (pepA2) from Shewanella oneidensis (strain ATCC 700550 / JCM 31522 / CIP 106686 / LMG 19005 / NCIMB 14063 / MR-1).